A 433-amino-acid chain; its full sequence is GTPase Obg (433 aa).

One can recognise an Obg domain in the interval 1–159; sequence MKFVDSADLI…FEIRAELKVL (159 aa). An OBG-type G domain is found at 160-332; sequence ADVGFVGLPN…LLFMIYEELK (173 aa). Residues 166–173, 191–195, 213–216, 284–287, and 313–315 each bind GTP; these read GLPNAGKS, FTTIT, DLPG, NKMD, and SGL. Residues serine 173 and threonine 193 each contribute to the Mg(2+) site. The OCT domain maps to 355–433; it reads KFEEQKEDIQ…VFDYELEWTD (79 aa).

This sequence belongs to the TRAFAC class OBG-HflX-like GTPase superfamily. OBG GTPase family. In terms of assembly, monomer. Requires Mg(2+) as cofactor.

It localises to the cytoplasm. Functionally, an essential GTPase which binds GTP, GDP and possibly (p)ppGpp with moderate affinity, with high nucleotide exchange rates and a fairly low GTP hydrolysis rate. Plays a role in control of the cell cycle, stress response, ribosome biogenesis and in those bacteria that undergo differentiation, in morphogenesis control. The polypeptide is GTPase Obg (Mycoplasma mycoides subsp. mycoides SC (strain CCUG 32753 / NCTC 10114 / PG1)).